The primary structure comprises 86 residues: Small ribosomal subunit protein uS17 (86 aa).

This sequence belongs to the universal ribosomal protein uS17 family. In terms of assembly, part of the 30S ribosomal subunit.

Functionally, one of the primary rRNA binding proteins, it binds specifically to the 5'-end of 16S ribosomal RNA. The sequence is that of Small ribosomal subunit protein uS17 from Helicobacter pylori (strain P12).